The primary structure comprises 439 residues: Cell division protein FtsA (439 aa).

This sequence belongs to the FtsA/MreB family. Self-interacts. Interacts with FtsZ.

Its subcellular location is the cell inner membrane. Its function is as follows. Cell division protein that is involved in the assembly of the Z ring. May serve as a membrane anchor for the Z ring. The polypeptide is Cell division protein FtsA (Shigella flexneri).